The following is a 369-amino-acid chain: Actin-related protein 2/3 complex subunit 1B-A (369 aa).

WD repeat units follow at residues 6-45, 50-89, 94-135, 140-179, 200-239, 242-282, and 321-364; these read FLLE…WSKI, EHNG…WKPT, RINR…WVCK, PIRS…VEER, SSCG…RVTS, TDTL…LSFG, and LHKN…SAMK.

It belongs to the WD repeat ARPC1 family. In terms of assembly, component of the Arp2/3 complex composed of actr2/arp2, actr3/arp3, arpc1 (arpc1a or arpc1b), arpc2, arpc3, arpc4 and arpc5.

The protein localises to the cytoplasm. The protein resides in the cytoskeleton. It localises to the nucleus. Its function is as follows. Component of the Arp2/3 complex, a multiprotein complex that mediates actin polymerization upon stimulation by nucleation-promoting factor (NPF). The Arp2/3 complex mediates the formation of branched actin networks in the cytoplasm, providing the force for cell motility. In addition to its role in the cytoplasmic cytoskeleton, the Arp2/3 complex also promotes actin polymerization in the nucleus, thereby regulating gene transcription and repair of damaged DNA. The Arp2/3 complex promotes homologous recombination (HR) repair in response to DNA damage by promoting nuclear actin polymerization, leading to drive motility of double-strand breaks (DSBs). The polypeptide is Actin-related protein 2/3 complex subunit 1B-A (arpc1b-a) (Xenopus laevis (African clawed frog)).